The chain runs to 565 residues: Glucose-6-phosphate isomerase (565 aa).

Catalysis depends on Glu-373, which acts as the Proton donor. Residues His-404 and Lys-530 contribute to the active site.

Belongs to the GPI family.

Its subcellular location is the cytoplasm. The catalysed reaction is alpha-D-glucose 6-phosphate = beta-D-fructose 6-phosphate. It participates in carbohydrate biosynthesis; gluconeogenesis. It functions in the pathway carbohydrate degradation; glycolysis; D-glyceraldehyde 3-phosphate and glycerone phosphate from D-glucose: step 2/4. Functionally, catalyzes the reversible isomerization of glucose-6-phosphate to fructose-6-phosphate. This Corynebacterium jeikeium (strain K411) protein is Glucose-6-phosphate isomerase.